Consider the following 245-residue polypeptide: Orotidine 5'-phosphate decarboxylase (245 aa).

Residues Asp22, Lys44, 71–80 (DLKFHDIPNT), Thr131, Arg192, Gln201, Gly221, and Arg222 contribute to the substrate site. Residue Lys73 is the Proton donor of the active site.

It belongs to the OMP decarboxylase family. Type 1 subfamily. As to quaternary structure, homodimer.

The enzyme catalyses orotidine 5'-phosphate + H(+) = UMP + CO2. It participates in pyrimidine metabolism; UMP biosynthesis via de novo pathway; UMP from orotate: step 2/2. Functionally, catalyzes the decarboxylation of orotidine 5'-monophosphate (OMP) to uridine 5'-monophosphate (UMP). The protein is Orotidine 5'-phosphate decarboxylase of Salmonella newport (strain SL254).